We begin with the raw amino-acid sequence, 216 residues long: UPF0134 protein MPN_344 (216 aa).

The span at 47–62 (FTIIEDQQDRPDKPEE) shows a compositional bias: basic and acidic residues. Disordered regions lie at residues 47 to 104 (FTII…PKPD) and 194 to 216 (GKMD…LESK). Over residues 68 to 78 (IPKPPKPPKGP) the composition is skewed to pro residues. The segment covering 83-93 (EPGQPGGPDDP) has biased composition (low complexity).

This sequence belongs to the UPF0134 family.

The polypeptide is UPF0134 protein MPN_344 (Mycoplasma pneumoniae (strain ATCC 29342 / M129 / Subtype 1) (Mycoplasmoides pneumoniae)).